Consider the following 583-residue polypeptide: Membrane protein insertase YidC (583 aa).

Helical transmembrane passes span 5-25, 341-361, 362-382, 427-447, 473-493, and 520-540; these read SVTG…FMSP, PFAE…VSNY, GLII…LSMA, IGGC…FYVF, FGFA…LMAV, and AMML…YLMF.

The protein belongs to the OXA1/ALB3/YidC family. Type 1 subfamily. In terms of assembly, interacts with the Sec translocase complex via SecD. Specifically interacts with transmembrane segments of nascent integral membrane proteins during membrane integration.

The protein localises to the cell inner membrane. Functionally, required for the insertion and/or proper folding and/or complex formation of integral membrane proteins into the membrane. Involved in integration of membrane proteins that insert both dependently and independently of the Sec translocase complex, as well as at least some lipoproteins. Aids folding of multispanning membrane proteins. The sequence is that of Membrane protein insertase YidC from Pelodictyon phaeoclathratiforme (strain DSM 5477 / BU-1).